Here is a 393-residue protein sequence, read N- to C-terminus: Homoserine O-succinyltransferase (393 aa).

The region spanning 62 to 372 is the AB hydrolase-1 domain; the sequence is NAVLVCHALN…PHGHDAFLLD (311 aa). Ser168 serves as the catalytic Nucleophile. Residue Arg238 participates in substrate binding. Residues Asp333 and His366 contribute to the active site. Asp367 contributes to the substrate binding site.

This sequence belongs to the AB hydrolase superfamily. MetX family. In terms of assembly, homodimer.

The protein resides in the cytoplasm. It catalyses the reaction L-homoserine + succinyl-CoA = O-succinyl-L-homoserine + CoA. It functions in the pathway amino-acid biosynthesis; L-methionine biosynthesis via de novo pathway; O-succinyl-L-homoserine from L-homoserine: step 1/1. Its function is as follows. Transfers a succinyl group from succinyl-CoA to L-homoserine, forming succinyl-L-homoserine. The chain is Homoserine O-succinyltransferase from Cupriavidus taiwanensis (strain DSM 17343 / BCRC 17206 / CCUG 44338 / CIP 107171 / LMG 19424 / R1) (Ralstonia taiwanensis (strain LMG 19424)).